The primary structure comprises 163 residues: MRIEKCYFCSGPIYPGHGMMFVRNDCKVFRFCKSKCHKNFKKRRNPRKVRWTKAFRKAAGKELTVDNSFEFEKRRNEPIKYQRELWNKTIDAMKRVEEIKQKRQAKFIMNRLKKNKELQKVQDIKEVKQNIHLIRAPLAGKGKQLEEKMVQQLQEDVDMEDAP.

The protein belongs to the eukaryotic ribosomal protein eL24 family. In terms of assembly, associated with nucleolar and cytoplasmic pre-60S particles. At the end of biogenesis it dissociates from cytoplasmic pre-60S particles and is likely to be exchanged for its ribosomal homolog, RPL24.

The protein resides in the nucleus. It localises to the nucleolus. Its function is as follows. Involved in the biogenesis of the 60S ribosomal subunit. Ensures the docking of GTPBP4/NOG1 to pre-60S particles. This chain is Probable ribosome biogenesis protein RLP24 (RSL24D1), found in Pongo abelii (Sumatran orangutan).